The chain runs to 445 residues: Fibrinogen gamma chain (445 aa).

Residues 1–25 form the signal peptide; that stretch reads MNWSLQLRSFILCWALLLLSPTGLA. Residue Asn78 is glycosylated (N-linked (GlcNAc...) asparagine). A Fibrinogen C-terminal domain is found at 170-416; sequence RIHDTTGKDC…ETTMKIIPFN (247 aa). Cys179 and Cys208 are disulfide-bonded. Positions 344, 346, and 350 each coordinate Ca(2+). Cys352 and Cys365 form a disulfide bridge. Residues 400 to 422 are gamma-chain polymerization, binding amino end of another fibrin alpha chain; it reads TRWYSMKETTMKIIPFNRLSIGD. Gln424 participates in a covalent cross-link: Isoglutamyl lysine isopeptide (Gln-Lys) (interchain with K-432). Positions 424-445 are disordered; the sequence is QQHHMGGSKQVSVEHEVDVEYP. Residue Ser431 is modified to Phosphoserine. An Isoglutamyl lysine isopeptide (Lys-Gln) (interchain with Q-424) cross-link involves residue Lys432. The segment covering 435–445 has biased composition (basic and acidic residues); the sequence is SVEHEVDVEYP.

As to quaternary structure, heterohexamer; disulfide linked. Contains 2 sets of 3 non-identical chains (alpha, beta and gamma). The 2 heterotrimers are in head to head conformation with the N-termini in a small central domain. Post-translationally, conversion of fibrinogen to fibrin is triggered by thrombin, which cleaves fibrinopeptides A and B from alpha and beta chains, and thus exposes the N-terminal polymerization sites responsible for the formation of the soft clot. The soft clot is converted into the hard clot by factor XIIIA which catalyzes the epsilon-(gamma-glutamyl)lysine cross-linking between gamma chains (stronger) and between alpha chains (weaker) of different monomers.

Its subcellular location is the secreted. In terms of biological role, together with fibrinogen alpha (FGA) and fibrinogen beta (FGB), polymerizes to form an insoluble fibrin matrix. Has a major function in hemostasis as one of the primary components of blood clots. In addition, functions during the early stages of wound repair to stabilize the lesion and guide cell migration during re-epithelialization. Was originally thought to be essential for platelet aggregation, based on in vitro studies using anticoagulated blood. However, subsequent studies have shown that it is not absolutely required for thrombus formation in vivo. Enhances expression of SELP in activated platelets via an ITGB3-dependent pathway. Maternal fibrinogen is essential for successful pregnancy. Fibrin deposition is also associated with infection, where it protects against IFNG-mediated hemorrhage. May also facilitate the antibacterial immune response via both innate and T-cell mediated pathways. This chain is Fibrinogen gamma chain (Fgg), found in Rattus norvegicus (Rat).